The sequence spans 262 residues: Ribose-5-phosphate isomerase A (262 aa).

Residues 33 to 36, 89 to 92, and 102 to 105 contribute to the substrate site; these read TGST, DGAD, and KGGG. Glutamate 111 acts as the Proton acceptor in catalysis. A substrate-binding site is contributed by lysine 129.

The protein belongs to the ribose 5-phosphate isomerase family. In terms of assembly, homodimer.

The enzyme catalyses aldehydo-D-ribose 5-phosphate = D-ribulose 5-phosphate. The protein operates within carbohydrate degradation; pentose phosphate pathway; D-ribose 5-phosphate from D-ribulose 5-phosphate (non-oxidative stage): step 1/1. In terms of biological role, catalyzes the reversible conversion of ribose-5-phosphate to ribulose 5-phosphate. This Cereibacter sphaeroides (strain ATCC 17023 / DSM 158 / JCM 6121 / CCUG 31486 / LMG 2827 / NBRC 12203 / NCIMB 8253 / ATH 2.4.1.) (Rhodobacter sphaeroides) protein is Ribose-5-phosphate isomerase A.